Reading from the N-terminus, the 318-residue chain is Mitochondrial thiamine pyrophosphate carrier (318 aa).

Solcar repeat units lie at residues 13-106 (NSKL…LTEL), 116-202 (HQFS…LKRA), and 214-309 (TGNL…FCNL). The next 6 membrane-spanning stretches (helical) occupy residues 19–39 (AVAG…LDVI), 87–107 (ILSI…TELL), 122–142 (FVCG…VDVL), 173–193 (VFYK…GLQF), 220–240 (LLCG…LDLF), and 293–313 (ALST…FHCI).

The protein belongs to the mitochondrial carrier (TC 2.A.29) family.

The protein resides in the mitochondrion membrane. It carries out the reaction thiamine phosphate(out) + thiamine diphosphate(in) = thiamine phosphate(in) + thiamine diphosphate(out). In terms of biological role, mitochondrial transporter mediating uptake of thiamine diphosphate into mitochondria. It is not clear if the antiporter activity is affected by the membrane potential or by the proton electrochemical gradient. The chain is Mitochondrial thiamine pyrophosphate carrier (Slc25a19) from Rattus norvegicus (Rat).